We begin with the raw amino-acid sequence, 115 residues long: Large ribosomal subunit protein bL20 (115 aa).

Belongs to the bacterial ribosomal protein bL20 family.

Its function is as follows. Binds directly to 23S ribosomal RNA and is necessary for the in vitro assembly process of the 50S ribosomal subunit. It is not involved in the protein synthesizing functions of that subunit. In Borreliella burgdorferi (strain ATCC 35210 / DSM 4680 / CIP 102532 / B31) (Borrelia burgdorferi), this protein is Large ribosomal subunit protein bL20 (rplT).